Consider the following 183-residue polypeptide: Ras-related protein Rap-2a (183 aa).

A GTP-binding site is contributed by 10–17; it reads GSGGVGKS. Residues 32 to 40 carry the Effector region motif; it reads YDPTIEDFY. Residue T35 is glycosylated ((Microbial infection) O-linked (Glc) threonine; by C.difficile toxin TcdA, and by P.sordellii toxin TcsL). GTP-binding positions include 57 to 61 and 116 to 119; these read DTAGT and NKVD. Residues C176 and C177 are each lipidated (S-palmitoyl cysteine). Cysteine methyl ester is present on C180. A lipid anchor (S-farnesyl cysteine) is attached at C180. A propeptide spans 181-183 (removed in mature form); the sequence is NIQ.

Belongs to the small GTPase superfamily. Ras family. As to quaternary structure, interacts (GTP-bound form) with RUNDC3A. Interacts with RGS14; the interaction is GTP-dependent. Interacts with PLCE1. Interacts with ARHGAP29, SGSM1, SGSM2 and SGSM3. Interacts (GTP-bound form preferentially) with TNIK (via the CNH domain); the interaction is direct and recruits RAP2A to the E3 ubiquitin ligase NEDD4. Interacts with MINK1. Interacts (GTP-bound form preferentially) with MAP4K4. Interacts with cytoskeletal actin. In terms of processing, ubiquitinated; undergoes 'Lys-63' monoubiquitination and diubiquitination by NEDD4. Multiple lysine residues are probably modified. Ubiquitination requires TNIK, prevents interaction with effectors and inactivates RAP2A. Ubiquitination by the ECS(RAB40B) complex leads to RAP2A localization to lamellipodia plasma membrane, activation, and regulation of sorting at early endosomes for recycling to the lamellipodia plasma membrane. Palmitoylated. Palmitoylation is required for association with recycling endosome membranes and activation of TNIK. Post-translationally, (Microbial infection) Glucosylated at Thr-35 by C.difficile toxin TcdA in the colonic epithelium, and by P.sordellii toxin TcsL in the vascular endothelium.

It is found in the midbody. The protein localises to the cell projection. Its subcellular location is the lamellipodium membrane. It localises to the golgi apparatus. The protein resides in the recycling endosome membrane. It is found in the lysosome. The enzyme catalyses GTP + H2O = GDP + phosphate + H(+). With respect to regulation, activated by the guanine nucleotide-exchange factors RAPGEF3 and RAPGEF4 in a cAMP-dependent manner. Nucleotide exchange is also specifically stimulated by RAPGEF5, RASGEF1A and RASGEF1B. In terms of biological role, small GTP-binding protein which cycles between a GDP-bound inactive and a GTP-bound active form. In its active form interacts with and regulates several effectors including MAP4K4, MINK1 and TNIK. Part of a signaling complex composed of NEDD4, RAP2A and TNIK which regulates neuronal dendrite extension and arborization during development. More generally, it is part of several signaling cascades and regulates cytoskeletal rearrangements, cell migration, cell adhesion and cell spreading. The polypeptide is Ras-related protein Rap-2a (Homo sapiens (Human)).